Consider the following 260-residue polypeptide: Proteasome subunit alpha 1 (260 aa).

The segment at 237 to 260 (AEADLLDTGEDADDEAEDEDATEE) is disordered. Over residues 240–260 (DLLDTGEDADDEAEDEDATEE) the composition is skewed to acidic residues.

The protein belongs to the peptidase T1A family. In terms of assembly, the 20S proteasome core is composed of 14 alpha and 14 beta subunits that assemble into four stacked heptameric rings, resulting in a barrel-shaped structure. The two inner rings, each composed of seven catalytic beta subunits, are sandwiched by two outer rings, each composed of seven alpha subunits. The catalytic chamber with the active sites is on the inside of the barrel. Has a gated structure, the ends of the cylinder being occluded by the N-termini of the alpha-subunits. Is capped at one or both ends by the proteasome regulatory ATPase, PAN.

It localises to the cytoplasm. With respect to regulation, the formation of the proteasomal ATPase PAN-20S proteasome complex, via the docking of the C-termini of PAN into the intersubunit pockets in the alpha-rings, triggers opening of the gate for substrate entry. Interconversion between the open-gate and close-gate conformations leads to a dynamic regulation of the 20S proteasome proteolysis activity. In terms of biological role, component of the proteasome core, a large protease complex with broad specificity involved in protein degradation. This is Proteasome subunit alpha 1 from Haloarcula marismortui (strain ATCC 43049 / DSM 3752 / JCM 8966 / VKM B-1809) (Halobacterium marismortui).